Here is a 159-residue protein sequence, read N- to C-terminus: NADH dehydrogenase [ubiquinone] 1 beta subcomplex subunit 10 (159 aa).

This sequence belongs to the complex I NDUFB10 subunit family. Complex I is composed of 45 different subunits.

It is found in the mitochondrion inner membrane. Functionally, accessory subunit of the mitochondrial membrane respiratory chain NADH dehydrogenase (Complex I), that is believed not to be involved in catalysis. Complex I functions in the transfer of electrons from NADH to the respiratory chain. The immediate electron acceptor for the enzyme is believed to be ubiquinone. The polypeptide is NADH dehydrogenase [ubiquinone] 1 beta subcomplex subunit 10 (Bombyx mori (Silk moth)).